Reading from the N-terminus, the 239-residue chain is MRKNGRGELDLRPILLEPRVSKHAEGSCLVRFGDTHVLCTASVDEKVPPHVYGTGAGWVTAEYGMLPRSTHERMQREAARGKQTGRTLEIQRLVGRALRAAVDLRAIGPRTVTLDCDVIQADGGTRTAAITGAYVALVQAVRGIQKRRQLAQDPVKRSVAAVSVGIVAGQVHLDLDYDEDSTAEVDMNVVATGDGALVEVQGTAEGKPFPRAELDRMLDAALAGLSRLKELQEAALRTP.

Residues R86 and 124–126 (GTR) each bind phosphate.

It belongs to the RNase PH family. Homohexameric ring arranged as a trimer of dimers.

It catalyses the reaction tRNA(n+1) + phosphate = tRNA(n) + a ribonucleoside 5'-diphosphate. In terms of biological role, phosphorolytic 3'-5' exoribonuclease that plays an important role in tRNA 3'-end maturation. Removes nucleotide residues following the 3'-CCA terminus of tRNAs; can also add nucleotides to the ends of RNA molecules by using nucleoside diphosphates as substrates, but this may not be physiologically important. Probably plays a role in initiation of 16S rRNA degradation (leading to ribosome degradation) during starvation. In Anaeromyxobacter dehalogenans (strain 2CP-1 / ATCC BAA-258), this protein is Ribonuclease PH.